The primary structure comprises 729 residues: Fatty acid oxidation complex subunit alpha (729 aa).

Positions 1–189 (MLYKGDTLYL…KIGLVDGVVK (189 aa)) are enoyl-CoA hydratase/isomerase. Residue Asp296 coordinates substrate. The 3-hydroxyacyl-CoA dehydrogenase stretch occupies residues 311 to 729 (ETPKQAAVLG…ARPVGDLKTA (419 aa)). NAD(+)-binding positions include Met324, Asp343, 400–402 (VVE), Lys407, and Ser429. His450 acts as the For 3-hydroxyacyl-CoA dehydrogenase activity in catalysis. Asn453 lines the NAD(+) pocket. Asn500 and Tyr660 together coordinate substrate. Residues 708–729 (RHNEPYYPPVEPARPVGDLKTA) form a disordered region.

It in the N-terminal section; belongs to the enoyl-CoA hydratase/isomerase family. This sequence in the C-terminal section; belongs to the 3-hydroxyacyl-CoA dehydrogenase family. In terms of assembly, heterotetramer of two alpha chains (FadB) and two beta chains (FadA).

It catalyses the reaction a (3S)-3-hydroxyacyl-CoA + NAD(+) = a 3-oxoacyl-CoA + NADH + H(+). It carries out the reaction a (3S)-3-hydroxyacyl-CoA = a (2E)-enoyl-CoA + H2O. The catalysed reaction is a 4-saturated-(3S)-3-hydroxyacyl-CoA = a (3E)-enoyl-CoA + H2O. The enzyme catalyses (3S)-3-hydroxybutanoyl-CoA = (3R)-3-hydroxybutanoyl-CoA. It catalyses the reaction a (3Z)-enoyl-CoA = a 4-saturated (2E)-enoyl-CoA. It carries out the reaction a (3E)-enoyl-CoA = a 4-saturated (2E)-enoyl-CoA. Its pathway is lipid metabolism; fatty acid beta-oxidation. Functionally, involved in the aerobic and anaerobic degradation of long-chain fatty acids via beta-oxidation cycle. Catalyzes the formation of 3-oxoacyl-CoA from enoyl-CoA via L-3-hydroxyacyl-CoA. It can also use D-3-hydroxyacyl-CoA and cis-3-enoyl-CoA as substrate. This chain is Fatty acid oxidation complex subunit alpha, found in Shigella flexneri serotype 5b (strain 8401).